The chain runs to 369 residues: Anhydro-N-acetylmuramic acid kinase (369 aa).

12–19 (GTSLDGVD) lines the ATP pocket.

It belongs to the anhydro-N-acetylmuramic acid kinase family.

The catalysed reaction is 1,6-anhydro-N-acetyl-beta-muramate + ATP + H2O = N-acetyl-D-muramate 6-phosphate + ADP + H(+). It participates in amino-sugar metabolism; 1,6-anhydro-N-acetylmuramate degradation. The protein operates within cell wall biogenesis; peptidoglycan recycling. In terms of biological role, catalyzes the specific phosphorylation of 1,6-anhydro-N-acetylmuramic acid (anhMurNAc) with the simultaneous cleavage of the 1,6-anhydro ring, generating MurNAc-6-P. Is required for the utilization of anhMurNAc either imported from the medium or derived from its own cell wall murein, and thus plays a role in cell wall recycling. The protein is Anhydro-N-acetylmuramic acid kinase of Actinobacillus pleuropneumoniae serotype 7 (strain AP76).